Consider the following 511-residue polypeptide: Maturase K (511 aa).

The protein belongs to the intron maturase 2 family. MatK subfamily.

The protein localises to the plastid. It localises to the chloroplast. Usually encoded in the trnK tRNA gene intron. Probably assists in splicing its own and other chloroplast group II introns. The sequence is that of Maturase K from Hordeum vulgare subsp. spontaneum (Wild barley).